A 450-amino-acid polypeptide reads, in one-letter code: Keratin, type I cytoskeletal 25 (450 aa).

Residues 1–23 (MSLRLSSASRRSCPRPTTGSLRL) are compositionally biased toward low complexity. Residues 1 to 26 (MSLRLSSASRRSCPRPTTGSLRLSGG) form a disordered region. The tract at residues 1-78 (MSLRLSSASR…VNERGLLSGN (78 aa)) is head. The interval 79–114 (EKVTMQNLNDRLASYLDSVHALEEANADLEQKIKGW) is coil 1A. Positions 79 to 394 (EKVTMQNLND…LLIGGDDGAC (316 aa)) constitute an IF rod domain. Residues 115–136 (YEKFGPGSCRGLDHDYSRYFPI) are linker 1. The segment at 137 to 228 (IDDLKNQIIA…KNHKEEMQVL (92 aa)) is coil 1B. A linker 12 region spans residues 229–251 (QCAAGGNVNVEMNAAPGVDLTVL). The tract at residues 252–390 (LNNMRAEYEA…ETYCLLIGGD (139 aa)) is coil 2. Positions 391–450 (DGACKSGGYKSKDYGSGNVGSQVKDSAKAIVVKKVLEEVDQRSKILTTRLRSLEEKSQSN) are tail. S442 is modified (phosphoserine).

The protein belongs to the intermediate filament family. As to quaternary structure, heterodimer of a type I and a type II keratin. Heterodimer with type II keratin KRT5 leading to the formation of keratin intermediate filament (KIF) network. Interacts with KRT6A to form filaments.

The protein localises to the cytoplasm. Essential for the proper assembly of type I and type II keratin protein complexes and formation of keratin intermediate filaments in the inner root sheath (irs). Plays a role in the cytoskeleton organization. The chain is Keratin, type I cytoskeletal 25 (KRT25) from Pan troglodytes (Chimpanzee).